A 594-amino-acid polypeptide reads, in one-letter code: Glomulin (594 aa).

Alanine 2 bears the N-acetylalanine mark. Residues 2-553 (AVEELQSIIK…EEIPNMPPEM (552 aa)) are alpha-helical region with structural similarity to HEAT repeats. The tract at residues 300-594 (IDQLPMVLSP…STSEENIGIK (295 aa)) is important for interaction with RBX1.

In terms of assembly, interacts with FKBP4 and FKBP1A. Isoform 1: Interacts with RBX1 (via RING domain). Identified in complexes that contain RBX1 plus one of the cullins CUL1, CUL2, CUL3, and CUL4A. Identified in a SCF complex composed of CUL1, RBX1, SKP1, FBXW7 and GLMN. Component of a SCF-like complex consisting of CUL7, RBX1, SKP1, FBXW8 and GLMN. Interacts with unphosphorylated MET and is released upon MET phosphorylation. Post-translationally, phosphorylated on tyrosine residues. As to expression, ubiquitous.

Its function is as follows. Regulatory component of cullin-RING-based SCF (SKP1-Cullin-F-box protein) E3 ubiquitin-protein ligase complexes. Inhibits E3 ubiquitin ligase activity by binding to RBX1 (via RING domain) and inhibiting its interaction with the E2 ubiquitin-conjugating enzyme CDC34. Inhibits RBX1-mediated neddylation of CUL1. Required for normal stability and normal cellular levels of key components of SCF ubiquitin ligase complexes, including FBXW7, RBX1, CUL1, CUL2, CUL3, CUL4A, and thereby contributes to the regulation of CCNE1 and MYC levels. Essential for normal development of the vasculature. Contributes to the regulation of RPS6KB1 phosphorylation. This Homo sapiens (Human) protein is Glomulin (GLMN).